Reading from the N-terminus, the 212-residue chain is Large ribosomal subunit protein uL3 (212 aa).

Residues 147 to 166 (GSTGQNQSPGKVFKGKKMPG) are disordered. Glutamine 153 carries the post-translational modification N5-methylglutamine.

Belongs to the universal ribosomal protein uL3 family. Part of the 50S ribosomal subunit. Forms a cluster with proteins L14 and L19. Methylated by PrmB.

Its function is as follows. One of the primary rRNA binding proteins, it binds directly near the 3'-end of the 23S rRNA, where it nucleates assembly of the 50S subunit. In Psychrobacter sp. (strain PRwf-1), this protein is Large ribosomal subunit protein uL3.